The chain runs to 247 residues: Adenylate kinase (247 aa).

42–47 (GAGKGT) contributes to the ATP binding site. Residues 62–91 (ATGDMLRAQVTAKTELGVQAKKIMDQGGLV) are NMP. AMP is bound by residues threonine 63, arginine 68, 89–91 (GLV), 118–121 (GFPR), and glutamine 125. The interval 159–196 (GRLVHPASGRSYHKLFNPPKKEMTDDQTGEPLVQRSDD) is LID. Residues arginine 160 and 169 to 170 (SY) each bind ATP. The tract at residues 169 to 191 (SYHKLFNPPKKEMTDDQTGEPLV) is disordered. AMP-binding residues include arginine 193 and arginine 204. Glutamine 232 provides a ligand contact to ATP.

It belongs to the adenylate kinase family. AK2 subfamily. In terms of assembly, monomer.

Its subcellular location is the cytoplasm. It localises to the cytosol. The protein localises to the mitochondrion intermembrane space. It catalyses the reaction AMP + ATP = 2 ADP. Functionally, catalyzes the reversible transfer of the terminal phosphate group between ATP and AMP. Plays an important role in cellular energy homeostasis and in adenine nucleotide metabolism. Adenylate kinase activity is critical for regulation of the phosphate utilization and the AMP de novo biosynthesis pathways. This is Adenylate kinase from Meyerozyma guilliermondii (strain ATCC 6260 / CBS 566 / DSM 6381 / JCM 1539 / NBRC 10279 / NRRL Y-324) (Yeast).